A 376-amino-acid polypeptide reads, in one-letter code: Phosphate acyltransferase (376 aa).

The segment at 334 to 376 (AGSLEQAKRDAGGPGSASQMASPIAGPVSGQPAEPYSAQSSKA) is disordered.

This sequence belongs to the PlsX family. As to quaternary structure, homodimer. Probably interacts with PlsY.

It is found in the cytoplasm. The catalysed reaction is a fatty acyl-[ACP] + phosphate = an acyl phosphate + holo-[ACP]. The protein operates within lipid metabolism; phospholipid metabolism. In terms of biological role, catalyzes the reversible formation of acyl-phosphate (acyl-PO(4)) from acyl-[acyl-carrier-protein] (acyl-ACP). This enzyme utilizes acyl-ACP as fatty acyl donor, but not acyl-CoA. This Paraburkholderia phymatum (strain DSM 17167 / CIP 108236 / LMG 21445 / STM815) (Burkholderia phymatum) protein is Phosphate acyltransferase.